An 87-amino-acid polypeptide reads, in one-letter code: U3-theraphotoxin-Hhn1a 17 (87 aa).

A signal peptide spans M1–A24. Residues S25–R52 constitute a propeptide that is removed on maturation. Disulfide bonds link C54–C67, C61–C72, and C66–C79.

The protein belongs to the neurotoxin 10 (Hwtx-1) family. 51 (Hntx-8) subfamily. Hntx-8 sub-subfamily. In terms of tissue distribution, expressed by the venom gland.

The protein resides in the secreted. In terms of biological role, ion channel inhibitor. The polypeptide is U3-theraphotoxin-Hhn1a 17 (Cyriopagopus hainanus (Chinese bird spider)).